Reading from the N-terminus, the 231-residue chain is 5'-methylthioadenosine/S-adenosylhomocysteine nucleosidase (231 aa).

Residue Glu-12 is the Proton acceptor of the active site. Substrate is bound by residues Gly-78, Val-153, and 174–175 (ME). Asp-198 acts as the Proton donor in catalysis.

The protein belongs to the PNP/UDP phosphorylase family. MtnN subfamily.

It catalyses the reaction S-adenosyl-L-homocysteine + H2O = S-(5-deoxy-D-ribos-5-yl)-L-homocysteine + adenine. The catalysed reaction is S-methyl-5'-thioadenosine + H2O = 5-(methylsulfanyl)-D-ribose + adenine. It carries out the reaction 5'-deoxyadenosine + H2O = 5-deoxy-D-ribose + adenine. It participates in amino-acid biosynthesis; L-methionine biosynthesis via salvage pathway; S-methyl-5-thio-alpha-D-ribose 1-phosphate from S-methyl-5'-thioadenosine (hydrolase route): step 1/2. Catalyzes the irreversible cleavage of the glycosidic bond in both 5'-methylthioadenosine (MTA) and S-adenosylhomocysteine (SAH/AdoHcy) to adenine and the corresponding thioribose, 5'-methylthioribose and S-ribosylhomocysteine, respectively. Also cleaves 5'-deoxyadenosine, a toxic by-product of radical S-adenosylmethionine (SAM) enzymes, into 5-deoxyribose and adenine. This is 5'-methylthioadenosine/S-adenosylhomocysteine nucleosidase from Aliivibrio salmonicida (strain LFI1238) (Vibrio salmonicida (strain LFI1238)).